A 555-amino-acid chain; its full sequence is Bifunctional epoxide hydrolase 2 (555 aa).

The tract at residues 1-224 (MTLRAAVFDL…KVTGIQLLNT (224 aa)) is phosphatase. Mg(2+) is bound by residues D9 and D11. K43 carries the N6-acetyllysine modification. The residue at position 55 (K55) is an N6-succinyllysine. 123–124 (TN) is a phosphate binding site. D185 is a Mg(2+) binding site. 2 positions are modified to N6-acetyllysine: K191 and K215. The segment at 235-555 (SDMSHGYVTV…ARNPPVVSKM (321 aa)) is epoxide hydrolase. An AB hydrolase-1 domain is found at 259–531 (PAVCLCHGFP…CGHWTQMDKP (273 aa)). D335 serves as the catalytic Nucleophile. Phosphoserine is present on S370. Y383 provides a ligand contact to substrate. Residues K421 and K455 each carry the N6-succinyllysine modification. Y466 acts as the Proton donor in catalysis. C522 carries the S-(15-deoxy-Delta12,14-prostaglandin J2-9-yl)cysteine lipid modification. The active-site Proton acceptor is the H524. The Microbody targeting signal motif lies at 553–555 (SKM). The residue at position 554 (K554) is an N6-succinyllysine.

This sequence belongs to the AB hydrolase superfamily. Epoxide hydrolase family. As to quaternary structure, homodimer. The cofactor is Mg(2+). The N-terminus is blocked. Post-translationally, the covalent modification of cysteine by 15-deoxy-Delta12,14-prostaglandin-J2 is autocatalytic and reversible. It may occur as an alternative to other cysteine modifications, such as S-nitrosylation and S-palmitoylation.

It localises to the cytoplasm. The protein resides in the peroxisome. It catalyses the reaction an epoxide + H2O = an ethanediol. The catalysed reaction is (9S,10S)-10-hydroxy-9-(phosphooxy)octadecanoate + H2O = (9S,10S)-9,10-dihydroxyoctadecanoate + phosphate. It carries out the reaction 12-phosphooxy-(9Z)-octadecenoate + H2O = 12-hydroxy-(9Z)-octadecenoate + phosphate. The enzyme catalyses 12-phosphooxy-(9E)-octadecenoate + H2O = 12-hydroxy-(9E)-octadecenoate + phosphate. It catalyses the reaction 12-(phosphooxy)octadecanoate + H2O = 12-hydroxyoctadecanoate + phosphate. The catalysed reaction is 8,9-epoxy-(5Z,11Z,14Z)-eicosatrienoate + H2O = 8,9-dihydroxy-(5Z,11Z,14Z)-eicosatrienoate. It carries out the reaction 11,12-epoxy-(5Z,8Z,14Z)-eicosatrienoate + H2O = 11,12-dihydroxy-(5Z,8Z,14Z)-eicosatrienoate. The enzyme catalyses 14,15-epoxy-(5Z,8Z,11Z)-eicosatrienoate + H2O = 14,15-dihydroxy-(5Z,8Z,11Z)-eicosatrienoate. It catalyses the reaction 9,10-epoxy-(12Z)-octadecenoate + H2O = 9,10-dihydroxy-(12Z)-octadecenoate. The catalysed reaction is 8-hydroxy-(11S,12S)-epoxy-(5Z,9E,14Z)-eicosatrienoate + H2O = (8,11R,12S)-trihydroxy-(5Z,9E,14Z)-eicosatrienoate. It carries out the reaction 10-hydroxy-(11S,12S)-epoxy- (5Z,8Z,14Z)-eicosatrienoate + H2O = (10,11S,12R)-trihydroxy-(5Z,8Z,14Z)-eicosatrienoate. The enzyme catalyses 1-tetradecanoyl-sn-glycerol 3-phosphate + H2O = 1-tetradecanoyl-sn-glycerol + phosphate. It catalyses the reaction 1-octadecanoyl-sn-glycero-3-phosphate + H2O = 1-octadecanoyl-sn-glycerol + phosphate. The catalysed reaction is 1-(5Z,8Z,11Z,14Z-eicosatetraenoyl)-sn-glycero-3-phosphate + H2O = 1-(5Z,8Z,11Z,14Z-eicosatetraenoyl)-sn-glycerol + phosphate. It carries out the reaction 1-hexadecanoyl-sn-glycero-3-phosphate + H2O = 1-hexadecanoyl-sn-glycerol + phosphate. The enzyme catalyses 1-(9Z-octadecenoyl)-sn-glycero-3-phosphate + H2O = 1-(9Z-octadecenoyl)-sn-glycerol + phosphate. It catalyses the reaction (8S,9R)-epoxy-(5Z,11Z,14Z)-eicosatrienoate + H2O = (8S,9S)-dihydroxy-(5Z,11Z,14Z)-eicosatrienoate. The catalysed reaction is (11S,12R)-epoxy-(5Z,8Z,14Z)-eicosatrienoate + H2O = (11R,12R)-dihydroxy-(5Z,8Z,14Z)-eicosatrienoate. It carries out the reaction (11S,12R)-epoxy-(5Z,8Z,14Z)-eicosatrienoate + H2O = (11S,12S)-dihydroxy-(5Z,8Z,14Z)-eicosatrienoate. The enzyme catalyses (14S,15R)-epoxy-(5Z,8Z,11Z)-eicosatrienoate + H2O = (14R,15R)-dihydroxy-(5Z,8Z,11Z)-eicosatrienoate. It catalyses the reaction (14S,15R)-epoxy-(5Z,8Z,11Z)-eicosatrienoate + H2O = (14S,15S)-dihydroxy-(5Z,8Z,11Z)-eicosatrienoate. The catalysed reaction is (11R,12S)-epoxy-(5Z,8Z,14Z)-eicosatrienoate + H2O = (11S,12S)-dihydroxy-(5Z,8Z,14Z)-eicosatrienoate. It carries out the reaction (11R,12S)-epoxy-(5Z,8Z,14Z)-eicosatrienoate + H2O = (11R,12R)-dihydroxy-(5Z,8Z,14Z)-eicosatrienoate. The enzyme catalyses (8S,9R)-epoxy-(5Z,11Z,14Z)-eicosatrienoate + H2O = (8R,9R)-dihydroxy-(5Z,11Z,14Z)-eicosatrienoate. It catalyses the reaction (14R,15S)-epoxy-(5Z,8Z,11Z)-eicosatrienoate + H2O = (14R,15R)-dihydroxy-(5Z,8Z,11Z)-eicosatrienoate. Inhibited by 1-(1-acetylpiperidin-4-yl)-3-(4-(trifl uoromethoxy)phenyl)urea (TPAU), 1-cyclohexyl-3-dodecylurea (CDU), 12-(3-adamantan-1-yl-ureido)-dodecanoic acid (AUDA), 1-((3S, 5S, 7S)-adamantan-1-yl)-3-(5-(2-(2-ethoxyethoxy) ethoxy)pentyl)urea (AEPU), N-adamantyl-N[']-cyclohexyl urea (ACU), 4-(((1S, 4S)-4-(3-((3S, 5S, 7S)-adamantan-1-yl) ureido)cyclohexyl)oxy)benzoic acid (c-AUCB), 4-(((1R, 4R)-4-(3-((3S, 5S, 7S)-adamantan-1-yl)ureido)cyclohexyl)oxy)benzoic acid (t-AUCB), 4-(((1R, 4R)-4-(3-(4(trifluoromethoxy)phenyl)ureido)cyclohexyl)oxy)benzoic acid (t-TAUCB) and to a lesser extent by 8-(3-((3S, 5S, 7S)-adamantan-1-yl)ureido) octanoic acid (AUOA). Phosphatase activity is inhibited by dodecyl-phosphate, phospholipids such as phospho-lysophosphatidic acids and fatty acids such as palmitic acid and lauric acid. In terms of biological role, bifunctional enzyme. The C-terminal domain has epoxide hydrolase activity and acts on epoxides (alkene oxides, oxiranes) and arene oxides. Plays a role in xenobiotic metabolism by degrading potentially toxic epoxides. Also determines steady-state levels of physiological mediators. Its function is as follows. Bifunctional enzyme. The N-terminal domain has lipid phosphatase activity, with the highest activity towards threo-9,10-phosphonooxy-hydroxy-octadecanoic acid, followed by erythro-9,10-phosphonooxy-hydroxy-octadecanoic acid, 12-phosphonooxy-octadec-9Z-enoic acid and 12-phosphonooxy-octadec-9E-enoic acid. Has phosphatase activity toward lyso-glycerophospholipids with also some lower activity toward lysolipids of sphingolipid and isoprenoid phosphates. This chain is Bifunctional epoxide hydrolase 2, found in Homo sapiens (Human).